Here is a 72-residue protein sequence, read N- to C-terminus: Translation initiation factor IF-1 (72 aa).

Positions 1–72 (MSKQDVIELE…SRGRITWRKK (72 aa)) constitute an S1-like domain.

The protein belongs to the IF-1 family. Component of the 30S ribosomal translation pre-initiation complex which assembles on the 30S ribosome in the order IF-2 and IF-3, IF-1 and N-formylmethionyl-tRNA(fMet); mRNA recruitment can occur at any time during PIC assembly.

The protein resides in the cytoplasm. Functionally, one of the essential components for the initiation of protein synthesis. Stabilizes the binding of IF-2 and IF-3 on the 30S subunit to which N-formylmethionyl-tRNA(fMet) subsequently binds. Helps modulate mRNA selection, yielding the 30S pre-initiation complex (PIC). Upon addition of the 50S ribosomal subunit IF-1, IF-2 and IF-3 are released leaving the mature 70S translation initiation complex. The polypeptide is Translation initiation factor IF-1 (Alkaliphilus oremlandii (strain OhILAs) (Clostridium oremlandii (strain OhILAs))).